A 129-amino-acid chain; its full sequence is UPF0325 protein YPTS_3127 (129 aa).

This sequence belongs to the UPF0325 family.

The chain is UPF0325 protein YPTS_3127 from Yersinia pseudotuberculosis serotype IB (strain PB1/+).